The chain runs to 776 residues: Calcium-independent phospholipase A2-gamma (776 aa).

Composition is skewed to basic and acidic residues over residues 226-238 (RQLQ…EESK) and 307-331 (LKSD…ICKD). 2 disordered regions span residues 226 to 274 (RQLQ…EALP) and 306 to 331 (KLKS…ICKD). The region spanning 439–634 (LAIDGGGTRG…LLNNPSALAL (196 aa)) is the PNPLA domain. The short motif at 443–448 (GGGTRG) is the GXGXXG element. Residues 469–489 (LFDYICGVSTGAILAFMLGLF) form a helical membrane-spanning segment. The short motif at 475-479 (GVSTG) is the GXSXG element. The Nucleophile role is filled by Ser477. Asp621 functions as the Proton acceptor in the catalytic mechanism. The short motif at 621–623 (DGG) is the DGA/G element. Lys730 carries the post-translational modification N6-succinyllysine.

It is found in the endoplasmic reticulum membrane. The protein localises to the microsome membrane. Its subcellular location is the mitochondrion membrane. It localises to the peroxisome membrane. It carries out the reaction a 1,2-diacyl-sn-glycero-3-phosphocholine + H2O = a 1-acyl-sn-glycero-3-phosphocholine + a fatty acid + H(+). The enzyme catalyses a 1,2-diacyl-sn-glycero-3-phosphocholine + H2O = a 2-acyl-sn-glycero-3-phosphocholine + a fatty acid + H(+). It catalyses the reaction a 1,2-diacyl-sn-glycero-3-phosphoethanolamine + H2O = a 1-acyl-sn-glycero-3-phosphoethanolamine + a fatty acid + H(+). The catalysed reaction is a 1-O-(1Z-alkenyl)-2-acyl-sn-glycero-3-phosphocholine + H2O = a 1-O-(1Z-alkenyl)-sn-glycero-3-phosphocholine + a fatty acid + H(+). It carries out the reaction a 1-acyl-sn-glycero-3-phosphocholine + H2O = sn-glycerol 3-phosphocholine + a fatty acid + H(+). The enzyme catalyses 1-acyl-2-(9Z,12Z)-octadecadienoyl-sn-glycero-3-phosphocholine + H2O = a 1-acyl-sn-glycero-3-phosphocholine + (9Z,12Z)-octadecadienoate + H(+). It catalyses the reaction 1-acyl-2-(5Z,8Z,11Z,14Z-eicosatetraenoyl)-sn-glycero-3-phosphocholine + H2O = a 1-acyl-sn-glycero-3-phosphocholine + (5Z,8Z,11Z,14Z)-eicosatetraenoate + H(+). The catalysed reaction is 1-hexadecanoyl-2-(5Z,8Z,11Z,14Z-eicosatetraenoyl)-sn-glycero-3-phosphocholine + H2O = 1-hexadecanoyl-sn-glycero-3-phosphocholine + (5Z,8Z,11Z,14Z)-eicosatetraenoate + H(+). It carries out the reaction 1-octadecanoyl-2-(9Z-octadecenoyl)-sn-glycero-3-phosphocholine + H2O = 1-octadecanoyl-sn-glycero-3-phosphocholine + (9Z)-octadecenoate + H(+). The enzyme catalyses 1-hexadecanoyl-2-(9Z-octadecenoyl)-sn-glycero-3-phosphocholine + H2O = 1-hexadecanoyl-sn-glycero-3-phosphocholine + (9Z)-octadecenoate + H(+). It catalyses the reaction 1-hexadecanoyl-2-(9Z,12Z-octadecadienoyl)-sn-glycero-3-phosphocholine + H2O = (9Z,12Z)-octadecadienoate + 1-hexadecanoyl-sn-glycero-3-phosphocholine + H(+). The catalysed reaction is 1-acyl-2-(9Z,12Z)-octadecadienoyl-sn-glycero-3-phosphoethanolamine + H2O = a 1-acyl-sn-glycero-3-phosphoethanolamine + (9Z,12Z)-octadecadienoate + H(+). It carries out the reaction 1-acyl-2-(5Z,8Z,11Z,14Z)-eicosatetraenoyl-sn-glycero-3-phosphoethanolamine + H2O = a 1-acyl-sn-glycero-3-phosphoethanolamine + (5Z,8Z,11Z,14Z)-eicosatetraenoate + H(+). The enzyme catalyses 1-hexadecanoyl-2-(5Z,8Z,11Z,14Z-eicosatetraenoyl)-sn-glycero-3-phosphoethanolamine + H2O = 1-hexadecanoyl-sn-glycero-3-phosphoethanolamine + (5Z,8Z,11Z,14Z)-eicosatetraenoate + H(+). It catalyses the reaction 1-hexadecanoyl-2-(5Z,8Z,11Z,14Z-eicosatetraenoyl)-sn-glycero-3-phosphocholine + H2O = 2-(5Z,8Z,11Z,14Z)-eicosatetraenoyl-sn-glycero-3-phosphocholine + hexadecanoate + H(+). The catalysed reaction is 1-octadecanoyl-2-(9Z-octadecenoyl)-sn-glycero-3-phosphocholine + H2O = 2-(9Z-octadecenoyl)-sn-glycero-3-phosphocholine + octadecanoate + H(+). It carries out the reaction 1-hexadecanoyl-2-(4Z,7Z,10Z,13Z,16Z,19Z-docosahexaenoyl)-sn-glycero-3-phosphocholine + H2O = 2-(4Z,7Z,10Z,13Z,16Z,19Z-docosahexaenoyl)-sn-glycero-3-phosphocholine + hexadecanoate + H(+). The enzyme catalyses 1-O-(1Z)-hexadecenyl-2 (5Z,8Z,11Z,14Z)-eicosatetraenoyl-sn-glycero-3-phosphocholine + H2O = 1-(1Z-hexadecenyl)-sn-glycero-3-phosphocholine + (5Z,8Z,11Z,14Z)-eicosatetraenoate + H(+). It catalyses the reaction 1-O-(1Z-hexadecenyl)-2-(9Z-octadecenoyl)-sn-glycero-3-phosphocholine + H2O = 1-(1Z-hexadecenyl)-sn-glycero-3-phosphocholine + (9Z)-octadecenoate + H(+). The catalysed reaction is 1-hexadecanoyl-sn-glycero-3-phosphocholine + H2O = sn-glycerol 3-phosphocholine + hexadecanoate + H(+). It carries out the reaction 1',3'-bis-[1,2-di-(9Z,12Z-octadecadienoyl)-sn-glycero-3-phospho]-glycerol + H2O = 1'-[1,2-di-(9Z,12Z-octadecadienoyl)-sn-glycero-3-phospho]-3'-[1-(9Z,12Z-octadecadienoyl)-sn-glycero-3-phospho]-glycerol + (9Z,12Z)-octadecadienoate + H(+). The enzyme catalyses 1'-[1-acyl-2-(9-hydroxy-(10E,12Z)-octadecadienoyl)-sn-glycero-3-phospho]-3'-[1,2-diacyl-sn-glycero-3-phospho]-glycerol + H2O = 9-hydroxy-(10E,12Z)-octadecadienoate + 1'-[1,2-diacyl-sn-glycero-3-phospho],3'-[1-acyl-sn-glycero-3-phospho]-glycerol + H(+). The protein operates within phospholipid metabolism. Calcium-independent phospholipase. Its function is as follows. Calcium-independent and membrane-bound phospholipase, that catalyzes the esterolytic cleavage of fatty acids from glycerophospholipids to yield free fatty acids and lysophospholipids, hence regulating membrane physical properties and the release of lipid second messengers and growth factors. Hydrolyzes phosphatidylethanolamine, phosphatidylcholine and probably phosphatidylinositol with a possible preference for the former. Has also a broad substrate specificity in terms of fatty acid moieties, hydrolyzing saturated and mono-unsaturated fatty acids at nearly equal rates from either the sn-1 or sn-2 position in diacyl phosphatidylcholine. However, has a weak activity toward polyunsaturated fatty acids at the sn-2 position, and thereby favors the production of 2-arachidonoyl lysophosphatidylcholine, a key branch point metabolite in eicosanoid signaling. On the other hand, can produce arachidonic acid from the sn-1 position of diacyl phospholipid and from the sn-2 position of arachidonate-containing plasmalogen substrates. Therefore, plays an important role in the mobilization of arachidonic acid in response to cellular stimuli and the generation of lipid second messengers. Can also hydrolyze lysophosphatidylcholine. In the mitochondrial compartment, catalyzes the hydrolysis and release of oxidized aliphatic chains from cardiolipin and integrates mitochondrial bioenergetics and signaling. It is essential for maintaining efficient bioenergetic mitochondrial function through tailoring mitochondrial membrane lipid metabolism and composition. The polypeptide is Calcium-independent phospholipase A2-gamma (Rattus norvegicus (Rat)).